A 375-amino-acid chain; its full sequence is Lipid-A-disaccharide synthase (375 aa).

Belongs to the LpxB family.

The enzyme catalyses a lipid X + a UDP-2-N,3-O-bis[(3R)-3-hydroxyacyl]-alpha-D-glucosamine = a lipid A disaccharide + UDP + H(+). Its pathway is bacterial outer membrane biogenesis; LPS lipid A biosynthesis. Functionally, condensation of UDP-2,3-diacylglucosamine and 2,3-diacylglucosamine-1-phosphate to form lipid A disaccharide, a precursor of lipid A, a phosphorylated glycolipid that anchors the lipopolysaccharide to the outer membrane of the cell. In Pseudomonas entomophila (strain L48), this protein is Lipid-A-disaccharide synthase.